The primary structure comprises 237 residues: (5-formylfuran-3-yl)methyl phosphate synthase (237 aa).

The active-site Schiff-base intermediate with substrate is the K29. The active-site Proton acceptor is the K87.

Belongs to the MfnB family.

The enzyme catalyses 2 D-glyceraldehyde 3-phosphate = 4-(hydroxymethyl)-2-furancarboxaldehyde phosphate + phosphate + 2 H2O. The protein operates within cofactor biosynthesis; methanofuran biosynthesis. In terms of biological role, catalyzes the formation of 4-(hydroxymethyl)-2-furancarboxaldehyde phosphate (4-HFC-P) from two molecules of glyceraldehyde-3-P (GA-3-P). This Methanopyrus kandleri (strain AV19 / DSM 6324 / JCM 9639 / NBRC 100938) protein is (5-formylfuran-3-yl)methyl phosphate synthase.